We begin with the raw amino-acid sequence, 234 residues long: MPTTPIPFTPLHMFRRLLCVGLFLFAGIHTTLGATLPLPSTSYKYTVLDQDLSAALQEFGNNLKISVNISAEVKGRIRGRIPELSPREFLDRLTDLYDLQWYYDGVVLYVSAAKEAQTRMLVLSSVHFSAFKLALDKLDISDERYPVRPAPGNGLVLVSGPPRFMALIEQTLNGLLAVAQAQPRATDTPARESVMVLFRGSSTTVVRGGRPEVFYTSEMLPENDDGGKAELSKK.

Residues 17–38 form a helical membrane-spanning segment; that stretch reads LLCVGLFLFAGIHTTLGATLPL.

The protein localises to the membrane. The chain is Nodulation protein NolW (nolW) from Sinorhizobium fredii (strain NBRC 101917 / NGR234).